Reading from the N-terminus, the 1121-residue chain is Phosphatidylinositol 4-kinase beta 1 (1121 aa).

In terms of domain architecture, PIK helical spans 1-143 (MPMGRFLSLV…SRIQEKCQIA (143 aa)). A compositionally biased stretch (polar residues) spans 187 to 207 (PPTQKSLSFSPSPGTNVQDDG). The tract at residues 187 to 210 (PPTQKSLSFSPSPGTNVQDDGSQL) is disordered. 9 tandem repeats follow at residues 212 to 231 (AEDN…RDAL), 244 to 263 (SEKE…EGDE), 266 to 285 (PNSE…EDED), 288 to 306 (NSSE…ESEE), 309 to 328 (SSSD…DEEE), 331 to 350 (ANSD…EDEE), 353 to 372 (PNSE…EDDK), 380 to 398 (EDKD…DDKR), and 420 to 438 (DERE…DDKK). The interval 212–508 (AEDNKIFKKL…FRDRDQSVED (297 aa)) is 11 X 20 AA approximate repeats (PPC). Disordered regions lie at residues 343-421 (ESKN…EEDE), 435-489 (DDKK…ESSP), 506-544 (VEDS…NTAS), and 794-825 (AAAA…NGGM). 4 stretches are compositionally biased toward basic and acidic residues: residues 358–376 (FFKK…VPKE), 383–405 (DGFL…EKNE), 412–421 (ADKKSGEEDE), and 435–445 (DDKKDIVKVDD). Over residues 446 to 455 (GNESEGDESP) the composition is skewed to acidic residues. 2 positions are modified to phosphoserine: serine 449 and serine 454. 2 repeat units span residues 454 to 472 (SPEF…EDAK) and 489 to 508 (PGTE…SVED). The span at 466–475 (IHPEDAKPTS) shows a compositional bias: basic and acidic residues. The span at 476–489 (ENENSSNGLVESSP) shows a compositional bias: polar residues. Residues 835–1106 (ELWEGKRDRI…LISSSLDAWR (272 aa)) enclose the PI3K/PI4K catalytic domain. A G-loop region spans residues 841 to 847 (RDRIRKA). A catalytic loop region spans residues 969-977 (QVKDRHNGN). The activation loop stretch occupies residues 988-1012 (HIDFGFMLSNSPGGVNFESAPFKLT).

The protein belongs to the PI3/PI4-kinase family. Type III PI4K subfamily. In terms of assembly, interacts with AHK2, CBL1 and RABA4D. Expressed constitutively in leaves, roots, flowers, and stems.

The protein resides in the cell membrane. Its subcellular location is the golgi apparatus. It is found in the trans-Golgi network. The protein localises to the cytoplasmic vesicle membrane. It catalyses the reaction a 1,2-diacyl-sn-glycero-3-phospho-(1D-myo-inositol) + ATP = a 1,2-diacyl-sn-glycero-3-phospho-(1D-myo-inositol 4-phosphate) + ADP + H(+). With respect to regulation, stimulated by phosphatidylinositol 4-phosphate (PtdIns4P). Slightly repressed by phosphatidyl-choline (PtdCho), wortmannin and adenosine. Functionally, acts on phosphatidylinositol (PtdIns) in the first committed step in the production of the second messenger inositol-1,4,5-trisphosphate. Necessary for proper organization of the trans-Golgi network (TGN) and post-Golgi secretion in root hairs. Together with PI4KB2, required during polarized root hair expansion and pollen tube elongation. Functions redundantly with PI4KB2 upstream of the cold response phosphoinositide-dependent phospholipase C (PI-PLC) pathway. The protein is Phosphatidylinositol 4-kinase beta 1 of Arabidopsis thaliana (Mouse-ear cress).